A 506-amino-acid polypeptide reads, in one-letter code: Xaa-Pro aminopeptidase 3 (506 aa).

Residues 1–31 (MPSLLSTPKLAPVLARLRGLSGCMSCLQRRY) constitute a mitochondrion transit peptide. The interaction with TNFRSF1B stretch occupies residues 54-79 (HPHLLRPGEVTPGLSQVEYALRRHKL). Positions 300, 331, 342, 423, 430, 450, and 474 each coordinate substrate. Positions 331, 342, and 423 each coordinate Mn(2+). Positions 450 and 474 each coordinate Mn(2+).

It belongs to the peptidase M24B family. In terms of assembly, homodimer. Interacts with TNFRSF1B/TNFR2 (activated) and TRAF2. It depends on Mn(2+) as a cofactor. As to expression, expressed in brain, kidney, heart, liver, skeletal muscle and testis.

It localises to the mitochondrion. The protein resides in the cytoplasm. The catalysed reaction is Release of any N-terminal amino acid, including proline, that is linked to proline, even from a dipeptide or tripeptide.. In terms of biological role, catalyzes the removal of a penultimate prolyl residue from the N-termini of peptides, such as Leu-Pro-Ala. Also shows low activity towards peptides with Ala or Ser at the P1 position. Promotes TNFRSF1B-mediated phosphorylation of MAPK8/JNK1 and MAPK9/JNK2, suggesting a function as an adapter protein for TNFRSF1B; the effect is independent of XPNPEP3 peptidase activity. May inhibit apoptotic cell death induced via TNF-TNFRSF1B signaling. This is Xaa-Pro aminopeptidase 3 (Xpnpep3) from Mus musculus (Mouse).